The sequence spans 344 residues: L-rhamnose-proton symporter (344 aa).

The next 10 membrane-spanning stretches (helical) occupy residues 4–24, 38–58, 68–88, 101–121, 137–157, 175–195, 214–234, 259–279, 290–310, and 323–343; these read AITM…CFYA, WSVG…ALLL, FSLS…IGNI, MGIG…TPII, TLLG…AGQL, LVLA…MNAA, LPSY…FCFI, VLLS…YAWG, ISWM…GLVL, and VLSL…MGMA.

It belongs to the L-rhamnose transporter (TC 2.A.7.6) family.

It localises to the cell inner membrane. It catalyses the reaction L-rhamnopyranose(in) + H(+)(in) = L-rhamnopyranose(out) + H(+)(out). Its function is as follows. Uptake of L-rhamnose across the cytoplasmic membrane with the concomitant transport of protons into the cell (symport system). In Escherichia coli O17:K52:H18 (strain UMN026 / ExPEC), this protein is L-rhamnose-proton symporter.